Reading from the N-terminus, the 117-residue chain is Larval cuticle protein A2B (117 aa).

Residues 12–15 (AAPV) form repeat 1. The Chitin-binding type R&amp;R domain maps to 29 to 95 (HPQYQYGYDV…AVVHREPLVA (67 aa)). Repeat unit 2 spans residues 108-111 (AAPV).

Its function is as follows. Component of the cuticle of the larva of Tenebrio molitor. This is Larval cuticle protein A2B from Tenebrio molitor (Yellow mealworm beetle).